The following is a 1370-amino-acid chain: Zinc finger MYM-type protein 3 (1370 aa).

Composition is skewed to low complexity over residues 1 to 12 (MDPSDFPSPFDP) and 52 to 61 (PSSGALDLLD). Disordered regions lie at residues 1–72 (MDPS…DPGV) and 90–301 (PSPP…QRAG). Residues 230–253 (ASEKPPERKRSERVRRAEPPKPEV) show a composition bias toward basic and acidic residues. Phosphoserine occurs at positions 263 and 267. A compositionally biased stretch (acidic residues) spans 263–279 (SDEDSDAMVDDPNDEDF). Residues K308, K320, and K328 each participate in a glycyl lysine isopeptide (Lys-Gly) (interchain with G-Cter in SUMO2) cross-link. MYM-type zinc fingers lie at residues 332–366 (QLFCSSSCLTTFSKKPSGKKTCTFCKKEIWNTKDS), 378–422 (HEFC…LHEV), 429–464 (HRLCSDSCFSKFRANKGLKTNCCDQCGAYIYTKTGS), 477–511 (KRFCNTTCLGAYKKKNTRVYPCVWCKTLCKNFEML), 521–559 (SLFCSLCCTTSYKVKQAGLTGPPRPCSFCRRSLSDPCYY), 567–604 (YQFCSPSCWTKFQRTSPEGGIHLSCHYCHSLFSGKPEV), 612–646 (FQFCCRDCCEDFKRLRGVVSQCEHCRQEKLLHEKL), 653–692 (KSFCSEGCVLLYKQDFTKKLGLCCITCTYCSQTCQRGVTE), and 699–733 (WDFCSEDCKSKYLLWYCKAARCHACKRQGKLLETI). Residue S464 is modified to Phosphoserine. The span at 759–794 (NLDTQSGPESLLNSQSPESKPQTPSQTKVENSNTVR) shows a compositional bias: polar residues. The tract at residues 759–830 (NLDTQSGPES…PPPPATPRKN (72 aa)) is disordered. Residues K778 and K786 each participate in a glycyl lysine isopeptide (Lys-Gly) (interchain with G-Cter in SUMO2) cross-link. T795 carries the post-translational modification Phosphothreonine. A Glycyl lysine isopeptide (Lys-Gly) (interchain with G-Cter in SUMO2) cross-link involves residue K804. Pro residues predominate over residues 815 to 826 (APTPPPPPPPAT). Residues T817 and T826 each carry the phosphothreonine modification. Glycyl lysine isopeptide (Lys-Gly) (interchain with G-Cter in SUMO2) cross-links involve residues K847, K861, K920, and K1275.

May be a component of a BHC histone deacetylase complex that contains HDAC1, HDAC2, HMG20B/BRAF35, KDM1A, RCOR1/CoREST, PHF21A/BHC80, ZMYM2, ZNF217, ZMYM3, GSE1 and GTF2I. As to expression, most abundant in brain, moderate in muscle and heart, low in other tissues except placenta.

It is found in the nucleus. Plays a role in the regulation of cell morphology and cytoskeletal organization. This chain is Zinc finger MYM-type protein 3 (ZMYM3), found in Homo sapiens (Human).